The sequence spans 127 residues: HTH-type transcriptional regulator ImmR (127 aa).

Over residues 1–12 (MSLGKRLKEARQ) the composition is skewed to basic and acidic residues. Residues 1 to 22 (MSLGKRLKEARQKAGYTQKEAA) form a disordered region. In terms of domain architecture, HTH cro/C1-type spans 7–61 (LKEARQKAGYTQKEAAEKLNIGNNNLSNYERDYRDPDTDTLLKLSNLYNVSTDYL). The segment at residues 18 to 37 (QKEAAEKLNIGNNNLSNYER) is a DNA-binding region (H-T-H motif).

This Bacillus subtilis (strain 168) protein is HTH-type transcriptional regulator ImmR (immR).